A 261-amino-acid polypeptide reads, in one-letter code: Cytochrome c oxidase subunit 3 (261 aa).

Over 1–15 (MTRQTHAYHMVNPSP) the chain is Mitochondrial matrix. A helical transmembrane segment spans residues 16–34 (WPLTGALSALLMTSGLIMW). At 35–40 (FHFNST) the chain is on the mitochondrial intermembrane side. A helical membrane pass occupies residues 41–66 (ILLMLGLTTNMLTMYQWWRDVIREST). At 67–72 (FQGHHT) the chain is on the mitochondrial matrix side. Residues 73–105 (PNVQKGLRYGMILFIISEVLFFTGFFWAFYHSS) form a helical membrane-spanning segment. Over 106–128 (LAPTPELGGCWPPTGIHPLNPLE) the chain is Mitochondrial intermembrane. Residues 129-152 (VPLLNTSVLLASGVSITWAHHSLM) traverse the membrane as a helical segment. At 153 to 155 (EGN) the chain is on the mitochondrial matrix side. Residues 156–183 (RNHMLQALFITIALGVYFTLLQASEYYE) form a helical membrane-spanning segment. The Mitochondrial intermembrane segment spans residues 184 to 190 (APFTISD). The chain crosses the membrane as a helical span at residues 191-223 (GVYGSTFFVATGFHGLHVIIGSTFLIVCFFRQL). The Mitochondrial matrix segment spans residues 224–232 (KFHFTSNHH). Residues 233-256 (FGFEAAAWYWHFVDVVWLFLYVSI) traverse the membrane as a helical segment. The Mitochondrial intermembrane segment spans residues 257–261 (YWWGS).

Belongs to the cytochrome c oxidase subunit 3 family. Component of the cytochrome c oxidase (complex IV, CIV), a multisubunit enzyme composed of 14 subunits. The complex is composed of a catalytic core of 3 subunits MT-CO1, MT-CO2 and MT-CO3, encoded in the mitochondrial DNA, and 11 supernumerary subunits COX4I, COX5A, COX5B, COX6A, COX6B, COX6C, COX7A, COX7B, COX7C, COX8 and NDUFA4, which are encoded in the nuclear genome. The complex exists as a monomer or a dimer and forms supercomplexes (SCs) in the inner mitochondrial membrane with NADH-ubiquinone oxidoreductase (complex I, CI) and ubiquinol-cytochrome c oxidoreductase (cytochrome b-c1 complex, complex III, CIII), resulting in different assemblies (supercomplex SCI(1)III(2)IV(1) and megacomplex MCI(2)III(2)IV(2)).

It localises to the mitochondrion inner membrane. It carries out the reaction 4 Fe(II)-[cytochrome c] + O2 + 8 H(+)(in) = 4 Fe(III)-[cytochrome c] + 2 H2O + 4 H(+)(out). Component of the cytochrome c oxidase, the last enzyme in the mitochondrial electron transport chain which drives oxidative phosphorylation. The respiratory chain contains 3 multisubunit complexes succinate dehydrogenase (complex II, CII), ubiquinol-cytochrome c oxidoreductase (cytochrome b-c1 complex, complex III, CIII) and cytochrome c oxidase (complex IV, CIV), that cooperate to transfer electrons derived from NADH and succinate to molecular oxygen, creating an electrochemical gradient over the inner membrane that drives transmembrane transport and the ATP synthase. Cytochrome c oxidase is the component of the respiratory chain that catalyzes the reduction of oxygen to water. Electrons originating from reduced cytochrome c in the intermembrane space (IMS) are transferred via the dinuclear copper A center (CU(A)) of subunit 2 and heme A of subunit 1 to the active site in subunit 1, a binuclear center (BNC) formed by heme A3 and copper B (CU(B)). The BNC reduces molecular oxygen to 2 water molecules using 4 electrons from cytochrome c in the IMS and 4 protons from the mitochondrial matrix. The sequence is that of Cytochrome c oxidase subunit 3 (MT-CO3) from Eudorcas rufifrons (Red-fronted gazelle).